The following is a 202-amino-acid chain: Putative pituitary tumor-transforming gene 3 protein (202 aa).

Residues 61 to 64 (RKAL) carry the D-box motif. The interval 67–92 (VNRATEKSVKTNGPLKQKQPSFSAKK) is disordered. The SH3-binding signature appears at 163–173 (PPLPLKMPSPP).

The protein belongs to the securin family.

The protein localises to the cytoplasm. It is found in the nucleus. This Pongo pygmaeus (Bornean orangutan) protein is Putative pituitary tumor-transforming gene 3 protein (PTTG3).